Reading from the N-terminus, the 347-residue chain is Ribosomal RNA small subunit methyltransferase C (347 aa).

This sequence belongs to the methyltransferase superfamily. RsmC family. As to quaternary structure, monomer.

The protein resides in the cytoplasm. It catalyses the reaction guanosine(1207) in 16S rRNA + S-adenosyl-L-methionine = N(2)-methylguanosine(1207) in 16S rRNA + S-adenosyl-L-homocysteine + H(+). In terms of biological role, specifically methylates the guanine in position 1207 of 16S rRNA in the 30S particle. This chain is Ribosomal RNA small subunit methyltransferase C, found in Shewanella baltica (strain OS195).